A 619-amino-acid chain; its full sequence is Probable transporter mch1 (619 aa).

Helical transmembrane passes span 88–108 (VISCLGAGSITAFSLYGPLFL), 120–140 (AVSIAAEISMYLPVPLFGYLC), 147–167 (PLALLSGLVFGGGYLLAAFAY), 184–204 (VMVVAFVAIGTATSCMYLAAV), 219–239 (IMLAVPIAGFGLSGMWQSQVA), 261–281 (FLFLALFLFCLGVIGTFGLRI), 377–397 (TMWWLAVGFFLVTGPGEAYIN), 428–448 (IIALTSTIARLLTGSLSDFFA), 480–500 (LAFLLPSALLLSLGYLLLSSP), 515–535 (LIGLGYGSAFSLVPIIISVVW), 541–561 (GTNWGIVAMVPAAGAAMWGVI), and 589–609 (FWAVGCTLSVWVAVVAWILAW).

The protein belongs to the major facilitator superfamily.

It localises to the vacuole membrane. Its function is as follows. Probable transporter. This chain is Probable transporter mch1 (mch1), found in Aspergillus fumigatus (strain ATCC MYA-4609 / CBS 101355 / FGSC A1100 / Af293) (Neosartorya fumigata).